Here is a 727-residue protein sequence, read N- to C-terminus: Adhesion G protein-coupled receptor L4 (727 aa).

Residues 1–19 (MKLLLFAAWFSSLLDPCRF) form the signal peptide. Topologically, residues 20–467 (LDICQSCHPN…LAHYNVLTRI (448 aa)) are extracellular. One can recognise an EGF-like 1; calcium-binding domain in the interval 52–90 (DDNECETVPEICGLHANCTNYVGGYYCNCLSGFISNGTE). 6 disulfides stabilise this stretch: cysteine 56/cysteine 69, cysteine 63/cysteine 78, cysteine 106/cysteine 118, cysteine 112/cysteine 127, cysteine 408/cysteine 438, and cysteine 426/cysteine 440. One can recognise an EGF-like 2; calcium-binding domain in the interval 102-139 (DINECEEDRKCGPNSKCHNNIGSFICSCLRGYTSPAGP). The 175-residue stretch at 282–456 (TQMQVHAGDV…AILMSSARAN (175 aa)) folds into the GAIN-B domain. A GPS region spans residues 408-456 (CAFWEYSPSMMGHWSLDGCIRTRVNTTHTSCSCNHLTHFAILMSSARAN). Residues 468 to 488 (TQLGMVISLICLSMCIFTFWF) form a helical membrane-spanning segment. Residues 489 to 496 (FRDIQNTR) are Cytoplasmic-facing. The helical transmembrane segment at 497 to 517 (TTIHKNLCCSLFMAQFIFLIG) threads the bilayer. Over 518-535 (INKSAHKWFCSLIAGLLH) the chain is Extracellular. The chain crosses the membrane as a helical span at residues 536 to 556 (YFFLAAFAWMCIEGIHLYLIV). The Cytoplasmic segment spans residues 557–568 (VGVIYNKGFLHR). Residues 569–589 (NFYAFGYGSPAVVVAISATLG) form a helical membrane-spanning segment. The Extracellular segment spans residues 590 to 609 (YKYYGTSSVCWLSTENNFIW). A helical membrane pass occupies residues 610–630 (SFIGPAILIILVNLLAFAVII). The Cytoplasmic segment spans residues 631 to 654 (YKVYRHTAVKKPEISHYENIRSCA). Residues 655–675 (RGAIALLFVLGVTWAFGVMYI) form a helical membrane-spanning segment. Over 676–682 (LYETTLT) the chain is Extracellular. Residues 683–703 (AYLFTFANVFQGMFIFIFLCV) traverse the membrane as a helical segment.

The protein belongs to the G-protein coupled receptor 2 family. Adhesion G-protein coupled receptor (ADGR) subfamily. As to quaternary structure, heterodimer of 2 chains generated by proteolytic processing; the large extracellular N-terminal fragment and the membrane-bound C-terminal fragment predominantly remain associated and non-covalently linked. In terms of processing, autoproteolytically processed at the GPS region of the GAIN-B domain; this cleavage modulates receptor activity.

The protein resides in the cell membrane. Orphan receptor that plays a role in vessel formation. This is Adhesion G protein-coupled receptor L4 from Danio rerio (Zebrafish).